The primary structure comprises 185 residues: 4-nitrophenol 4-monooxygenase/4-nitrocatechol 2-monooxygenase, reductase component (185 aa).

It belongs to the non-flavoprotein flavin reductase family. As to quaternary structure, the 4-NP/4-NCA monooxygenase is composed of an oxygenase component NpcA and a reductase component NpcB.

The catalysed reaction is 4-nitrophenol + NADH + O2 + H(+) = 4-nitrocatechol + NAD(+) + H2O. The enzyme catalyses 4-nitrocatechol + NADPH + O2 = 2-hydroxy-1,4-benzoquinone + nitrite + NADP(+) + H2O. It catalyses the reaction 4-nitrocatechol + NADH + O2 = 2-hydroxy-1,4-benzoquinone + nitrite + NAD(+) + H2O. The protein operates within aromatic compound metabolism. It participates in xenobiotic degradation. With respect to regulation, inhibited by methimazole. Functionally, involved in the degradation of para-nitrophenol (4-NP). Catalyzes both the initial hydroxylation of 4-NP to produce 4-nitrocatechol (4-NCA) and the subsequent oxidative release of the nitro group from 4-NCA to produce 2-hydroxy-1,4-benzoquinone. It can also use 4-nitroresorcinol as substrate with a rate of nitrite release similar to that observed with the two physiological substrates, 4-PN and 4-NCA. In Rhodococcus opacus (Nocardia opaca), this protein is 4-nitrophenol 4-monooxygenase/4-nitrocatechol 2-monooxygenase, reductase component (npcB).